A 258-amino-acid chain; its full sequence is Serine protease sp-Eoc49 (258 aa).

Positions 1-18 (MVLIRVLANLLVLQLSYA) are cleaved as a signal peptide. A Peptidase S1 domain is found at 25 to 249 (VVGGGECNRN…YTDWIQSIIA (225 aa)). The N-linked (GlcNAc...) asparagine glycan is linked to Asn-44. Cys-50 and Cys-66 are joined by a disulfide. The Charge relay system role is filled by His-65. 2 N-linked (GlcNAc...) asparagine glycosylation sites follow: Asn-79 and Asn-103. Asp-110 (charge relay system) is an active-site residue. 3 disulfide bridges follow: Cys-142–Cys-210, Cys-174–Cys-189, and Cys-200–Cys-225. A glycan (N-linked (GlcNAc...) asparagine) is linked at Asn-154. Ser-204 serves as the catalytic Charge relay system. N-linked (GlcNAc...) asparagine glycosylation is present at Asn-251.

Belongs to the peptidase S1 family. Snake venom subfamily. In terms of assembly, monomer. Expressed by the venom gland.

It localises to the secreted. Its function is as follows. Snake venom serine protease that may act in the hemostasis system of the prey. This Echis ocellatus (Ocellated saw-scaled viper) protein is Serine protease sp-Eoc49.